The chain runs to 646 residues: Depudecin biosynthesis cluster-specific transcription activator DEP6 (646 aa).

Positions 16 to 43 form a DNA-binding region, zn(2)-C6 fungal-type; that stretch reads CEICRERKVRCDRALPKCRRCDRLNQPC. Disordered stretches follow at residues 76–130 and 345–366; these read TTAA…SQSQ and KSEH…LALP. Residues 349–360 show a composition bias toward polar residues; it reads SQGMQNRETQSG.

The protein localises to the nucleus. In terms of biological role, transcription factor that positively regulates the expression of the gene cluster that mediates the biosynthesis of depudecin, a highly oxidized eleven-carbon linear polyketide that acts as a histone deacetylase (HDAC) inhibitor and makes a small contribution to pathogenesis. The polypeptide is Depudecin biosynthesis cluster-specific transcription activator DEP6 (Alternaria brassicicola (Dark leaf spot agent)).